Reading from the N-terminus, the 1099-residue chain is SLIT-ROBO Rho GTPase-activating protein 3 (1099 aa).

In terms of domain architecture, F-BAR spans 19-314 (AQIKEIRTQL…AVDNLDSRSD (296 aa)). The tract at residues 205–225 (HEDRPQRRSSVKKIEKMKEKR) is disordered. Residues 352 to 392 (QTELLMRYHQLQSRLATLKIENEEVRKTLDATMQTLQDMLT) adopt a coiled-coil conformation. The disordered stretch occupies residues 471–493 (ERAECGTTRPPCLPPKPQKMRRP). In terms of domain architecture, Rho-GAP spans 506–694 (GSMEAFIKDS…TIIIHHEAIF (189 aa)). One can recognise an SH3 domain in the interval 744–803 (VEQIEAIAKFDYMGRSPRELSFKKGASLLLYHRASEDWWEGRHNGVDGLIPHQYIVVQDM). The segment covering 809–820 (DSLSQKADSEAS) has biased composition (polar residues). Residues 809–847 (DSLSQKADSEASSGPLLDDKASSKNDLQSPTEHISDYGF) form a disordered region. Phosphoserine occurs at positions 817, 820, 821, 837, and 858. Disordered stretches follow at residues 861-911 (AAIP…SPEK) and 926-950 (PDKKALSEGHSMRSTCGSTRHSSLG). The span at 926–936 (PDKKALSEGHS) shows a compositional bias: basic and acidic residues. The segment covering 937 to 947 (MRSTCGSTRHS) has biased composition (polar residues). A coiled-coil region spans residues 952–987 (HKSLEAEALAEDIEKTMSTALHELRELERQNTVKQA). Ser-954 carries the post-translational modification Phosphoserine. The interval 995–1099 (LEPLKNPPGP…NSSADKSGTM (105 aa)) is disordered. Composition is skewed to low complexity over residues 1026–1038 (RRSSSSSTEMMTT) and 1060–1074 (VRPVVQHRSSSSSSS). Positions 1089–1099 (PNSSADKSGTM) are enriched in polar residues.

Homodimer. Forms a heterooligomer with SRGAP1 and SRGAP2 through its F-BAR domain. Interacts with WASF1. Probably interacts with ROBO1. Interacts with FASLG. Highly expressed in adult and fetal brain. Expressed at low levels in kidney. Isoform 3 is expressed in the kidney but is absent in the brain.

Its function is as follows. GTPase-activating protein for RAC1 and perhaps Cdc42, but not for RhoA small GTPase. May attenuate RAC1 signaling in neurons. This chain is SLIT-ROBO Rho GTPase-activating protein 3 (SRGAP3), found in Homo sapiens (Human).